The sequence spans 68 residues: Beta-defensin 1 (68 aa).

The N-terminal stretch at 1–21 (MRTSYLLLFTLCLLLSEMASG) is a signal peptide. The propeptide occupies 22 to 32 (GNFLTGLGHRS). 3 cysteine pairs are disulfide-bonded: Cys-37–Cys-66, Cys-44–Cys-59, and Cys-49–Cys-67.

The protein belongs to the beta-defensin family. In terms of assembly, monomer. Homodimer.

The protein localises to the secreted. It is found in the membrane. Has bactericidal activity. May act as a ligand for C-C chemokine receptor CCR6. Positively regulates the sperm motility and bactericidal activity in a CCR6-dependent manner. Binds to CCR6 and triggers Ca2+ mobilization in the sperm which is important for its motility. The polypeptide is Beta-defensin 1 (DEFB1) (Pongo pygmaeus (Bornean orangutan)).